We begin with the raw amino-acid sequence, 354 residues long: Guanine nucleotide-binding protein G(o) subunit alpha (354 aa).

Gly-2 is lipidated: N-myristoyl glycine. Cys-3 carries S-palmitoyl cysteine lipidation. The G-alpha domain occupies 32–354 (KDIKLLLLGA…ANNLRGCGLY (323 aa)). A G1 motif region spans residues 35-48 (KLLLLGAGESGKST). GTP-binding positions include 40 to 47 (GAGESGKS), 176 to 182 (LRTRVKT), 201 to 205 (DVGGQ), 270 to 273 (NKKD), and Ala-326. Mg(2+)-binding residues include Ser-47 and Thr-182. The tract at residues 174–182 (DILRTRVKT) is G2 motif. The tract at residues 197 to 206 (FKLFDVGGQR) is G3 motif. Residues 266 to 273 (ILFLNKKD) are G4 motif. The tract at residues 324-329 (TCATDT) is G5 motif.

It belongs to the G-alpha family. G(i/o/t/z) subfamily. In terms of assembly, g proteins are composed of 3 units; alpha, beta and gamma. The alpha chain contains the guanine nucleotide binding site.

Guanine nucleotide-binding proteins (G proteins) are involved as modulators or transducers in various transmembrane signaling systems. The G(o) protein function is not clear. The chain is Guanine nucleotide-binding protein G(o) subunit alpha from Planorbella trivolvis (Marsh rams-horn).